Here is a 328-residue protein sequence, read N- to C-terminus: Solute-binding protein Bamb_6123 (328 aa).

The first 26 residues, 1 to 26 (MTHRFPRSRTALAVALMAGFAMSAQA), serve as a signal peptide directing secretion. 6 residues coordinate beta-D-galacturonate: His35, Glu73, Arg89, Arg149, Asn209, and Glu236. 6 residues coordinate beta-D-glucuronate: His35, Glu73, Arg89, Arg149, Asn209, and Glu236.

Belongs to the bacterial solute-binding protein 7 family. The complex is comprised of an extracytoplasmic solute-binding protein and a heteromeric permease formed by two transmembrane proteins.

It is found in the periplasm. In terms of biological role, solute-binding protein that binds D-galacturonate and D-glucuronate (in vitro). Probably part of a tripartite ATP-independent periplasmic (TRAP) transport system that mediates solute transport into the cytoplasm. The chain is Solute-binding protein Bamb_6123 from Burkholderia ambifaria (strain ATCC BAA-244 / DSM 16087 / CCUG 44356 / LMG 19182 / AMMD) (Burkholderia cepacia (strain AMMD)).